The sequence spans 457 residues: MDIIIKNGTIVTADGISPADLGIKDGKIAQIGGTFGPAGRTIDASGRYVFPGGIDVHTHVETVSFNTQSADTFATATVAAACGGTTTIVDFCQQDRGHSLREAVAKWDGMAGGKSAIDYGYHIIVLDPTDSVIEELEVLPDLGITSFKVFMAYRGMNMIDDVTLLRTLDKAAKTGSLVMVHAENGDAADYLRDKFVADGKTAPIYHALSRPPRVEAEATARALALAEIVNAPIYIVHLTCEESFDELMRAKARGVHALAETCTQYLYLTKDDLERPDFEGAKYVFTPPPRTKKDQEILWNALRNGVLETVSSDHCSWLFEGHKDRGRNDFRAIPNGAPGVEERLMMVYQGVNEGRISLTQFVELVATRPAKVFGMFPEKGTVAVGSDADIVLWDPEAEMVIEQSAMHNAMDYSSYEGHKIKGVPKTVLLRGKVIVDEGTYVGAPTDGQFRKRRKYKQ.

Residues His-57 and His-59 each contribute to the Zn(2+) site. Ser-69 is subject to Phosphoserine. Position 148 (Lys-148) interacts with Zn(2+). Lys-148 bears the N6-carboxylysine mark. Substrate is bound at residue Tyr-153. 2 residues coordinate Zn(2+): His-181 and His-237. Thr-286 lines the substrate pocket. Asp-313 contacts Zn(2+). Asn-335 is a substrate binding site.

This sequence belongs to the metallo-dependent hydrolases superfamily. Hydantoinase/dihydropyrimidinase family. As to quaternary structure, homotetramer. It depends on Zn(2+) as a cofactor. In terms of processing, carboxylation allows a single lysine to coordinate two zinc ions.

Catalyzes the stereospecific hydrolysis of the cyclic amide bond of D-hydantoin derivatives. The protein is D-hydantoinase (hyuA) of Rhizobium radiobacter (Agrobacterium tumefaciens).